A 201-amino-acid chain; its full sequence is MAFSTLKSDRERGFLDGHFLIAMPGMADGNFTRSVVYVCAHTTAGAMGFIINRTQPVKFADILLHLDLIDQNDAIMLPDHARNFPIQCGGPVETGRGFVLHSDDYLSDSSIPVSDDISLTATLDIVRAISDGRGPARATMLLGYAGWGPGQLEAEIANNGWLNCPASEDLIFDPVLDNKYDRALALIGISPATLSAEAGHA.

This sequence belongs to the UPF0301 (AlgH) family.

The polypeptide is UPF0301 protein Avi_1069 (Allorhizobium ampelinum (strain ATCC BAA-846 / DSM 112012 / S4) (Agrobacterium vitis (strain S4))).